The primary structure comprises 166 residues: MGGAQVLLLLTLLGTPLVTHGTPPLVVDPSIGSQLGLGSVLGLDLGSMGGSGRPPCRPINVTVAVEKEECPQCMAVTTTACGGYCRTREPVYRSPLGPPPQSSCTYGALRYERWDLWGCPIGSDPKVILPVALSCRCARCPIATSDCTVQGLGPAFCGAPGGFGGQ.

A signal peptide spans 1 to 21 (MGGAQVLLLLTLLGTPLVTHG). 6 disulfide bridges follow: cysteine 56-cysteine 104, cysteine 70-cysteine 119, cysteine 73-cysteine 157, cysteine 81-cysteine 135, cysteine 85-cysteine 137, and cysteine 140-cysteine 147. Asparagine 60 is a glycosylation site (N-linked (GlcNAc...) asparagine).

It belongs to the glycoprotein hormones subunit beta family. As to quaternary structure, heterodimer of a common alpha chain and a unique beta chain which confers biological specificity to thyrotropin, lutropin, follitropin and gonadotropin.

Its subcellular location is the secreted. Its function is as follows. Promotes spermatogenesis and ovulation by stimulating the testes and ovaries to synthesize steroids. This Coturnix japonica (Japanese quail) protein is Lutropin subunit beta (LHB).